A 626-amino-acid polypeptide reads, in one-letter code: Chaperone protein HtpG (626 aa).

Residues 1–339 form an a; substrate-binding region; sequence MSQNQETRGF…SNDLPLNVSR (339 aa). The interval 340–555 is b; sequence EILQDNKITA…NDQMTTQMAK (216 aa). The segment at 556-626 is c; that stretch reads LFAAAGQPVP…FIKRINKLLG (71 aa).

Belongs to the heat shock protein 90 family. In terms of assembly, homodimer.

The protein localises to the cytoplasm. Functionally, molecular chaperone. Has ATPase activity. The chain is Chaperone protein HtpG from Haemophilus influenzae (strain PittGG).